Reading from the N-terminus, the 279-residue chain is Dermonecrotic toxin LrSicTox-alphaIA1i (279 aa).

Residue His11 is part of the active site. Mg(2+) contacts are provided by Glu31 and Asp33. The active-site Nucleophile is the His47. 2 cysteine pairs are disulfide-bonded: Cys51–Cys57 and Cys53–Cys196. Asp91 serves as a coordination point for Mg(2+). Residue Asn256 is glycosylated (N-linked (GlcNAc...) asparagine).

It belongs to the arthropod phospholipase D family. Class II subfamily. The cofactor is Mg(2+). In terms of tissue distribution, expressed by the venom gland.

It localises to the secreted. It carries out the reaction an N-(acyl)-sphingosylphosphocholine = an N-(acyl)-sphingosyl-1,3-cyclic phosphate + choline. The enzyme catalyses an N-(acyl)-sphingosylphosphoethanolamine = an N-(acyl)-sphingosyl-1,3-cyclic phosphate + ethanolamine. It catalyses the reaction a 1-acyl-sn-glycero-3-phosphocholine = a 1-acyl-sn-glycero-2,3-cyclic phosphate + choline. The catalysed reaction is a 1-acyl-sn-glycero-3-phosphoethanolamine = a 1-acyl-sn-glycero-2,3-cyclic phosphate + ethanolamine. Its activity is regulated as follows. Inhibited with low affinity by edelfosine. Functionally, dermonecrotic toxins cleave the phosphodiester linkage between the phosphate and headgroup of certain phospholipids (sphingolipid and lysolipid substrates), forming an alcohol (often choline) and a cyclic phosphate. This toxin acts on sphingomyelin (SM). It also acts on a broad range of lysophospholipids, like lysophosphatidylinositol (LPI), lysophosphatidylglycerol (LPG), lysophosphatidylethanolamine (LPE), lysobisphosphatidic acid (LBPA), lysophosphatidylserine (LPS) and lysophosphatidylcholines (LPC) of varying chain lengths. The substrate preference is LPI &gt; LPG &gt; LPS &gt; LPC &gt;&gt; LPE, LBPA. Furthermore, the enzyme also act on cyclic phosphatidic acid and lyso-platelet activating factor (LPAF, an alkyl-LPC). The enzyme does not act on sphingosylphosphorylcholine (SPC, also known as lyso-sphingomyelin) and PAF. The toxin may also act on ceramide phosphoethanolamine (CPE). It acts by transphosphatidylation, releasing exclusively cyclic phosphate products as second products. It does not exhibit detectable PLA1/2 activity. It induces dose-dependent hemolysis and dermonecrosis. Also induces increased vascular permeability, edema, inflammatory response, and platelet aggregation. The sequence is that of Dermonecrotic toxin LrSicTox-alphaIA1i from Loxosceles reclusa (Brown recluse spider).